A 149-amino-acid polypeptide reads, in one-letter code: MSIRKILQFPDYRLRLLSKPIKIINKKTKKIIYDMFDTMYANNGIGLAAPQINILKQIIVISSLKPTMSELVLINPVILKKNKKYINTIEGCLSIPKKTAKIKRSSCIKIQAINTYGKSFTLTAKSLLSICIQHEIDHLIGKLFIDYIN.

Cys-92 and His-134 together coordinate Fe cation. Residue Glu-135 is part of the active site. Fe cation is bound at residue His-138.

It belongs to the polypeptide deformylase family. The cofactor is Fe(2+).

The enzyme catalyses N-terminal N-formyl-L-methionyl-[peptide] + H2O = N-terminal L-methionyl-[peptide] + formate. Functionally, removes the formyl group from the N-terminal Met of newly synthesized proteins. Requires at least a dipeptide for an efficient rate of reaction. N-terminal L-methionine is a prerequisite for activity but the enzyme has broad specificity at other positions. The sequence is that of Peptide deformylase from Buchnera aphidicola subsp. Cinara cedri (strain Cc).